Reading from the N-terminus, the 215-residue chain is MADKSDLNALSGRFRGYYPVVIDVETAGFNAQSDALLEIAAVTLQMNKEGWLLPDETLHFHVEPFEGANLQPEALAFNGIDPTNPLRGAVSEHDALHAIFKAVRKGIKDKGCNRAIIVAHNANFDHSFVMAAAERASLKRNPFHPFATFDTAALSGLVLGQTVLAKACLAAGIPFDSSQAHSALYDTLQTAKLFCELVNRWKKLGGWPLPAAESG.

One can recognise an Exonuclease domain in the interval 20–194 (VVIDVETAGF…YDTLQTAKLF (175 aa)). Mg(2+) contacts are provided by Asp-23, Glu-25, His-181, and Asp-186. The active-site Proton donor/acceptor is His-181.

It belongs to the RNase T family. As to quaternary structure, homodimer. Mg(2+) is required as a cofactor.

Trims short 3' overhangs of a variety of RNA species, leaving a one or two nucleotide 3' overhang. Responsible for the end-turnover of tRNA: specifically removes the terminal AMP residue from uncharged tRNA (tRNA-C-C-A). Also appears to be involved in tRNA biosynthesis. The protein is Ribonuclease T of Yersinia pestis.